Consider the following 340-residue polypeptide: Aurora kinase A- and ninein-interacting protein (340 aa).

An interaction with AURKA region spans residues 175-340 (QREAKRKGEG…DSEGNRVIRH (166 aa)). A compositionally biased stretch (basic and acidic residues) spans 178–190 (AKRKGEGLRESKT). Positions 178-209 (AKRKGEGLRESKTDCPGMGSHIRPPGSKCHQP) are disordered. The segment at 266 to 340 (RDSWSQLFTE…DSEGNRVIRH (75 aa)) is interaction with RBBP8/CtIP. A Phosphoserine modification is found at Ser277. Residues 293–317 (DVTNARNQGSGQFPDSPQAQGQDGP) are disordered. Polar residues predominate over residues 296–313 (NARNQGSGQFPDSPQAQG).

The protein belongs to the AUNIP family. In terms of assembly, interacts (via C-terminus) with AURKA (via C-terminus). Interacts (via N-terminus) with NIN; this interaction blocks NIN phosphorylation by both AURKA and GSK3B. Identified in a complex with NIN and AURKA. Interacts with RBBP8/CtIP.

Its subcellular location is the nucleus. It is found in the chromosome. The protein resides in the cytoplasm. It localises to the cytoskeleton. The protein localises to the microtubule organizing center. Its subcellular location is the centrosome. It is found in the spindle pole. Functionally, DNA-binding protein that accumulates at DNA double-strand breaks (DSBs) following DNA damage and promotes DNA resection and homologous recombination. Serves as a sensor of DNA damage: binds DNA with a strong preference for DNA substrates that mimic structures generated at stalled replication forks, and anchors RBBP8/CtIP to DSB sites to promote DNA end resection and ensuing homologous recombination repair. Inhibits non-homologous end joining (NHEJ). Required for the dynamic movement of AURKA at the centrosomes and spindle apparatus during the cell cycle. The chain is Aurora kinase A- and ninein-interacting protein from Mus musculus (Mouse).